Reading from the N-terminus, the 180-residue chain is ATP-dependent protease subunit HslV (180 aa).

The active site involves threonine 6. Na(+)-binding residues include alanine 164, cysteine 167, and threonine 170.

Belongs to the peptidase T1B family. HslV subfamily. As to quaternary structure, a double ring-shaped homohexamer of HslV is capped on each side by a ring-shaped HslU homohexamer. The assembly of the HslU/HslV complex is dependent on binding of ATP.

Its subcellular location is the cytoplasm. The enzyme catalyses ATP-dependent cleavage of peptide bonds with broad specificity.. With respect to regulation, allosterically activated by HslU binding. In terms of biological role, protease subunit of a proteasome-like degradation complex believed to be a general protein degrading machinery. The sequence is that of ATP-dependent protease subunit HslV from Borrelia turicatae (strain 91E135).